The following is a 441-amino-acid chain: MDDDDFGGFEAAETFDGGSGETQTTSPAIPWAAFPAVSGVHLSPSSPEIVLDRDHSSSIGCLSSDAIISSPENTHAANSIVSQTIPKAQIQQSTHTHLDISLFPLGLTDEKSNGTIALVDDSEDPGANVSNIQLQQKISSLEIKLKVSEEEKQRIKQDVESLMEKHNVLEKGFLKEKEQEAISFQDRYKELQEKHKQELEDMRKAGHEALSIIVDEYKALLQSSVKQQVEAIEKQYISAIEKQAHKCEELLNAQHQRLLEMLDTEKELLKEKIKEALIQQSQEQKEILEKCLEEERQRNKEALVSAAKLEKEAVKDAVLKVVEEERKNLEKAHAEERELWKTEHAKDQEKVSQEIQKAIQEQRKISQETVKAAIIEEQKRSEKAVEEAVKRTRDELIEYIKEQKRLDQVIRQRSLSSLELFLSCAQKQLSALIATEPVDIE.

The segment at 1-16 is GGA1-binding motif; that stretch reads MDDDDFGGFEAAETFD. The tract at residues 1-26 is disordered; it reads MDDDDFGGFEAAETFDGGSGETQTTS. Phosphoserine is present on residues serine 43 and serine 46. 2 coiled-coil regions span residues 130 to 209 and 249 to 407; these read SNIQ…GHEA and ELLN…KRLD. The homodimerization stretch occupies residues 210-413; it reads LSIIVDEYKA…KRLDQVIRQR (204 aa).

In terms of assembly, homodimer. Interacts with GGA1, GGA2 and AP1G1. As to expression, widely expressed.

The protein resides in the membrane. It localises to the golgi apparatus. Its subcellular location is the trans-Golgi network membrane. It is found in the trans-Golgi network. Its function is as follows. Involved in the regulation of membrane traffic through the trans-Golgi network (TGN). Functions in close cooperation with the GGAs in the sorting of hydrolases to lysosomes. The sequence is that of Coiled-coil domain-containing protein 91 (CCDC91) from Homo sapiens (Human).